A 594-amino-acid chain; its full sequence is UvrABC system protein C (594 aa).

The region spanning 14–91 is the GIY-YIG domain; that stretch reads DSPGCYLHKD…IQENMPKYNI (78 aa). The region spanning 196-231 is the UVR domain; the sequence is DKIIDDLRSKMLEASHNQEFERAAEYRDLISGIATM.

This sequence belongs to the UvrC family. In terms of assembly, interacts with UvrB in an incision complex.

The protein resides in the cytoplasm. Functionally, the UvrABC repair system catalyzes the recognition and processing of DNA lesions. UvrC both incises the 5' and 3' sides of the lesion. The N-terminal half is responsible for the 3' incision and the C-terminal half is responsible for the 5' incision. The polypeptide is UvrABC system protein C (Streptococcus equi subsp. equi (strain 4047)).